The following is a 716-amino-acid chain: Fusoxypene synthase (716 aa).

Positions 4 to 328 (LSYQSRLIPP…WLSACSRQNT (325 aa)) are sesterterpenoid synthase. Asp-96 lines the Mg(2+) pocket. Asp-96 lines the substrate pocket. Residues 187-190 (RMTN) form a substrate region. Position 231 (Asn-231) interacts with substrate. Residues 235 to 239 (SYERE) are substrate. Residues 329–711 (WKTNCSIDGK…CLATLSMEGC (383 aa)) are geranylfarnesyl diphosphate synthase. Isopentenyl diphosphate is bound by residues Lys-422, Arg-425, and His-454. 2 residues coordinate Mg(2+): Asp-461 and Asp-465. Dimethylallyl diphosphate is bound at residue Arg-470. Residue Arg-471 coordinates isopentenyl diphosphate. The dimethylallyl diphosphate site is built by Lys-548, Thr-549, Gln-587, Asn-594, and Lys-602.

In the N-terminal section; belongs to the terpene synthase family. The protein in the C-terminal section; belongs to the FPP/GGPP synthase family.

It carries out the reaction 4 isopentenyl diphosphate + dimethylallyl diphosphate = (2E,6E,10E,14E)-geranylfarnesyl diphosphate + 4 diphosphate. The catalysed reaction is (2E,6E,10E,14E)-geranylfarnesyl diphosphate = fusoxypene A + diphosphate. The enzyme catalyses (2E,6E,10E,14E)-geranylfarnesyl diphosphate = fusoxypene B + diphosphate. It catalyses the reaction (2E,6E,10E,14E)-geranylfarnesyl diphosphate = fusoxypene C + diphosphate. It carries out the reaction (2E,6E,10E,14E)-geranylfarnesyl diphosphate = (-)-astellatene + diphosphate. In terms of biological role, bifunctional sesterterpenoid synthase that performs both prenyl transferase and terpene cyclase activity, converting isopentenyl diphosphate and dimethylallyl diphosphate into geranylfarnesyl diphosphate (GFPP) and then converting GFPP into the enantiomeric sesterterpenes with a 5-6-7-3-5 ring system fusoxypene A, fusoxypene B, fusoxypene C and (-)-astellatene. The polypeptide is Fusoxypene synthase (Fusarium oxysporum (Fusarium vascular wilt)).